The primary structure comprises 236 residues: DNA repair protein RecO (236 aa).

It belongs to the RecO family.

In terms of biological role, involved in DNA repair and RecF pathway recombination. This Rickettsia typhi (strain ATCC VR-144 / Wilmington) protein is DNA repair protein RecO.